The following is a 607-amino-acid chain: Chaperone protein DnaK (607 aa).

Thr-174 is modified (phosphothreonine; by autocatalysis). Residues Gly-577–Tyr-607 are disordered. Gly residues predominate over residues Pro-583–Gly-595.

It belongs to the heat shock protein 70 family.

Its function is as follows. Acts as a chaperone. The sequence is that of Chaperone protein DnaK from Caldicellulosiruptor bescii (strain ATCC BAA-1888 / DSM 6725 / KCTC 15123 / Z-1320) (Anaerocellum thermophilum).